We begin with the raw amino-acid sequence, 2211 residues long: Norsolorinic acid synthase stcA (2211 aa).

Residues 11 to 251 (FLFGDQTYDF…REIPIYVPAH (241 aa)) form a starter unit:ACP transacylase (SAT) domain region. Residues 358 to 378 (PAEPPTSINKTPERYSHRPGS) are disordered. Residues 368 to 378 (TPERYSHRPGS) are compositionally biased toward basic and acidic residues. One can recognise a Ketosynthase family 3 (KS3) domain in the interval 380 to 812 (RGKLAIVSMS…GGNTAVLVED (433 aa)). Active-site for beta-ketoacyl synthase activity residues include cysteine 552, histidine 687, and histidine 730. The interval 912-1201 (IACSGQGSQY…MAGMIKTTLD (290 aa)) is malonyl-CoA:ACP transacylase (MAT) domain. Serine 1004 serves as the catalytic For acyl/malonyl transferase activity. The disordered stretch occupies residues 1289–1316 (TATSDYQLPSDEQVAAKRPSKQDESKEA). The N-terminal hotdog fold stretch occupies residues 1327–1468 (HRVVEEKTEP…CTVRFTSEAQ (142 aa)). The region spanning 1327-1643 (HRVVEEKTEP…LRRVPRRGLR (317 aa)) is the PKS/mFAS DH domain. The segment at 1340 to 1643 (TLVVETDISR…LRRVPRRGLR (304 aa)) is product template (PT) domain. The active-site Proton acceptor; for dehydratase activity is the histidine 1359. The segment at 1495–1643 (FIRYTTKSGY…LRRVPRRGLR (149 aa)) is C-terminal hotdog fold. The Proton donor; for dehydratase activity role is filled by aspartate 1555. The interval 1655–1706 (RLHGNQQAVKTQAPQRAALKQKPQSSPTQPHASKVAYSRSATSPTAGKPVVA) is disordered. 2 stretches are compositionally biased toward polar residues: residues 1658 to 1668 (GNQQAVKTQAP) and 1676 to 1685 (KPQSSPTQPH). Carrier domains are found at residues 1712 to 1791 (REGD…SGSA) and 1839 to 1915 (DELF…GTTS). Serine 1749 and serine 1873 each carry O-(pantetheine 4'-phosphoryl)serine. Over residues 1912–1926 (GTTSGSTTGSSGSGS) the composition is skewed to low complexity. Residues 1912-1947 (GTTSGSTTGSSGSGSSEDETDSIPSTPEEYTTADTR) are disordered. Residues 1934 to 1945 (IPSTPEEYTTAD) show a composition bias toward polar residues. The thioesterase/Claisen cyclase (TE/CLC) domain stretch occupies residues 1969–2205 (ILFMLPDGGG…KEHVYLVREL (237 aa)). Catalysis depends on serine 2039, which acts as the For thioesterase activity.

Requires pantetheine 4'-phosphate as cofactor.

The catalysed reaction is hexanoyl-[ACP] + 7 malonyl-CoA + 6 H(+) = noranthrone + holo-[ACP] + 7 CO2 + 7 CoA + 2 H2O. The protein operates within mycotoxin biosynthesis; sterigmatocystin biosynthesis. Its function is as follows. Non-reducing polyketide synthase; part of the gene cluster that mediates the biosynthesis of sterigmatocystin (ST), a polyketide-derived furanocoumarin which is part of the most toxic and carcinogenic compounds among the known mycotoxins. The first step in the biosynthesis of sterigmatocystin is the production of hexanoate by the fatty acid synthase (FAS) units stcJ and stcK. The polyketide backbone is assembled by the non-reducing polyketide synthase stcA by condensation of the starter hexanoyl-CoA and 7 malonyl-CoA extender units followed by cyclization and release of norsolorinic acid. Norsolorinic acid is the first stable intermediate in the biosynthesis of sterigmatocystin and is converted into averantin (AVN) by the ketoreductase stcE which reduces the hexanoate ketone to an alcohol. Averantin is then oxidized into 5'-hydroxyaverantin (HAVN) by the cytochrome P450 monooxygenase stcF. 5'-hydroxyaverantin is further converted to 5'-oxyaverantin (OAVN) by the 5'-hydroxyaverantin dehydrogenase stcG. The next step is the conversion of OAVN into averufin (AVF) which is catalyzed by a yet to be identified enzyme. The cytochrome P450 monooxygenase stcB and the flavin-binding monooxygenase stcW are both required for the conversion of averufin to 1-hydroxyversicolorone. The esterase stcI probably catalyzes the formation of versiconal hemiacetal acetate from 1-hydroxyversicolorone. The oxydoreductase stcN then probably catalyzes the biosynthetic step from versiconal to versicolorin B (VERB). The next step is performed by the versicolorin B desaturase stcL to produce versicolorin A (VERA). The ketoreductase stcU and the cytochrome P450 monooxygenase stcS are involved in the conversion of versicolorin A to demethylsterigmatocystin. The Baeyer-Villiger oxidas stcQ and the reductase stcR might be involved in the biosynthetic step from versicolorin A to demethylsterigmatocystin. The final step in the biosynthesis of sterigmatocystin is the methylation of demethylsterigmatocystin catalyzed by the methyltransferase stcP. This Emericella nidulans (strain FGSC A4 / ATCC 38163 / CBS 112.46 / NRRL 194 / M139) (Aspergillus nidulans) protein is Norsolorinic acid synthase stcA.